Here is a 223-residue protein sequence, read N- to C-terminus: Ribose-5-phosphate isomerase A (223 aa).

Substrate contacts are provided by residues 32–35 (TGST), 85–88 (DGAD), and 98–101 (KGGG). E107 acts as the Proton acceptor in catalysis. K125 is a substrate binding site.

The protein belongs to the ribose 5-phosphate isomerase family. In terms of assembly, homodimer.

It catalyses the reaction aldehydo-D-ribose 5-phosphate = D-ribulose 5-phosphate. It participates in carbohydrate degradation; pentose phosphate pathway; D-ribose 5-phosphate from D-ribulose 5-phosphate (non-oxidative stage): step 1/1. Its function is as follows. Catalyzes the reversible conversion of ribose-5-phosphate to ribulose 5-phosphate. The sequence is that of Ribose-5-phosphate isomerase A from Marinomonas sp. (strain MWYL1).